The primary structure comprises 128 residues: T-cell leukemia/lymphoma protein 1B (128 aa).

Belongs to the TCL1 family. As to quaternary structure, interacts with AKT1 and AKT2 (via PH domain). Does not interact with AKT3. As to expression, expressed in a variety of tissues including placenta and testis.

Its function is as follows. Enhances the phosphorylation and activation of AKT1 and AKT2. The chain is T-cell leukemia/lymphoma protein 1B (TCL1B) from Homo sapiens (Human).